Reading from the N-terminus, the 652-residue chain is Acetyl-coenzyme A synthetase (652 aa).

CoA-binding positions include 191-194, Thr311, and Asn335; that span reads RAGR. ATP is bound by residues 387 to 389, 411 to 416, Asp500, and Arg515; these read GEP and DTWWQT. Ser523 serves as a coordination point for CoA. Residue Arg526 participates in ATP binding. Residues Val537, His539, and Ile542 each coordinate Mg(2+). Arg584 is a binding site for CoA. Lys609 carries the post-translational modification N6-acetyllysine.

This sequence belongs to the ATP-dependent AMP-binding enzyme family. It depends on Mg(2+) as a cofactor. Post-translationally, acetylated. Deacetylation by the SIR2-homolog deacetylase activates the enzyme.

It catalyses the reaction acetate + ATP + CoA = acetyl-CoA + AMP + diphosphate. In terms of biological role, catalyzes the conversion of acetate into acetyl-CoA (AcCoA), an essential intermediate at the junction of anabolic and catabolic pathways. Acs undergoes a two-step reaction. In the first half reaction, Acs combines acetate with ATP to form acetyl-adenylate (AcAMP) intermediate. In the second half reaction, it can then transfer the acetyl group from AcAMP to the sulfhydryl group of CoA, forming the product AcCoA. Enables the cell to use acetate during aerobic growth to generate energy via the TCA cycle, and biosynthetic compounds via the glyoxylate shunt. Acetylates CheY, the response regulator involved in flagellar movement and chemotaxis. This chain is Acetyl-coenzyme A synthetase, found in Escherichia coli O157:H7.